We begin with the raw amino-acid sequence, 393 residues long: S-adenosylmethionine synthase 2 (393 aa).

Mg(2+) is bound at residue E9. Position 15 (H15) interacts with ATP. Position 43 (E43) interacts with K(+). The L-methionine site is built by E56 and Q99. ATP-binding positions include 167-169 (DGK), 235-238 (SGRF), D246, 252-253 (RK), A269, K273, and K277. D246 provides a ligand contact to L-methionine. K277 serves as a coordination point for L-methionine.

The protein belongs to the AdoMet synthase family. In terms of assembly, homotetramer. Mn(2+) serves as cofactor. It depends on Mg(2+) as a cofactor. Co(2+) is required as a cofactor. The cofactor is K(+). Requires NH4(+) as cofactor. As to expression, mostly expressed in roots, and, to a lower extent, in hypocotyls and cotyledons.

It localises to the cytoplasm. The enzyme catalyses L-methionine + ATP + H2O = S-adenosyl-L-methionine + phosphate + diphosphate. The protein operates within amino-acid biosynthesis; S-adenosyl-L-methionine biosynthesis; S-adenosyl-L-methionine from L-methionine: step 1/1. Inhibited by products of SAMS reaction (SAM, Pi, PPi), substrate analogs (cycloleucine and ethionine), and alternative nucleotides (GTP, CTP and ADP). Strongly repressed by PPPi. In terms of biological role, catalyzes the formation of S-adenosylmethionine from methionine and ATP. The reaction comprises two steps that are both catalyzed by the same enzyme: formation of S-adenosylmethionine (AdoMet) and triphosphate, and subsequent hydrolysis of the triphosphate. This Catharanthus roseus (Madagascar periwinkle) protein is S-adenosylmethionine synthase 2 (SAMS2).